Consider the following 471-residue polypeptide: Pancreatic lipase-related protein 2 (471 aa).

The N-terminal stretch at 1-17 is a signal peptide; the sequence is MLPSWTIGLLLLATVRG. C21 and C27 are oxidised to a cystine. N71 carries an N-linked (GlcNAc...) asparagine glycan. The segment at 93 to 105 is required for galactolipase activity; that stretch reads IHGFIDKGEDSWP. C109 and C120 are joined by a disulfide. Catalysis depends on S171, which acts as the Nucleophile. Residue D195 is the Charge relay system of the active site. Positions 206, 209, 211, and 214 each coordinate Ca(2+). The cysteines at positions 256 and 280 are disulfide-linked. Positions 257 to 279 are required for galactolipase activity; the sequence is QKNTLSTIVDVDGIWEGIEDFAA. The active-site Charge relay system is H282. 2 cysteine pairs are disulfide-bonded: C304–C317 and C320–C325. N-linked (GlcNAc...) asparagine glycosylation is present at N355. The region spanning 359-471 is the PLAT domain; the sequence is WRYRVSVTLA…ENILQTLNPC (113 aa). An intrachain disulfide couples C455 to C471.

This sequence belongs to the AB hydrolase superfamily. Lipase family.

The protein resides in the secreted. The protein localises to the zymogen granule membrane. It localises to the cell projection. It is found in the neuron projection. It catalyses the reaction a triacylglycerol + H2O = a diacylglycerol + a fatty acid + H(+). The enzyme catalyses a 1,2-diacyl-3-O-(beta-D-galactosyl)-sn-glycerol + 2 H2O = 3-beta-D-galactosyl-sn-glycerol + 2 a fatty acid + 2 H(+). The catalysed reaction is 1,2,3-tri-(9Z-octadecenoyl)-glycerol + H2O = di-(9Z)-octadecenoylglycerol + (9Z)-octadecenoate + H(+). It carries out the reaction di-(9Z)-octadecenoylglycerol + H2O = (9Z-octadecenoyl)-glycerol + (9Z)-octadecenoate + H(+). It catalyses the reaction (9Z-octadecenoyl)-glycerol + H2O = glycerol + (9Z)-octadecenoate + H(+). The enzyme catalyses 1-(9Z-octadecenoyl)-glycerol + H2O = glycerol + (9Z)-octadecenoate + H(+). The catalysed reaction is 1,2,3-tripropanoylglycerol + H2O = dipropanoylglycerol + propanoate + H(+). It carries out the reaction 1,2,3-tributanoylglycerol + H2O = dibutanoylglycerol + butanoate + H(+). It catalyses the reaction 1,2,3-trioctanoylglycerol + H2O = dioctanoylglycerol + octanoate + H(+). The enzyme catalyses 1,2-didecanoylglycerol + H2O = decanoylglycerol + decanoate + H(+). The catalysed reaction is long chain 1,2-diacyl-3-O-beta-D-galactosyl-sn-glycerol + H2O = long chain acyl-3-O-beta-D-galactosyl-sn-glycerol + a fatty acid + H(+). It carries out the reaction 1,2-dioctanoyl-3-O-beta-D-galactosyl-sn-glycerol + H2O = octanoyl-3-(beta-D-galactosyl)-sn-glycerol + octanoate + H(+). It catalyses the reaction 1,2-didodecanoyl-3-beta-D-galactosyl-sn-glycerol + H2O = dodecanoyl-3-beta-D-galactosyl-sn-glycerol + dodecanoate + H(+). The enzyme catalyses 1-beta-D-galactosyl-2,3-didodecanoyl-sn-glycerol + H2O = 1-beta-D-galactosyl-dodecanoyl-sn-glycerol + dodecanoate + H(+). The catalysed reaction is a 1,2-diacyl-3-O-[alpha-D-galactosyl-(1-&gt;6)-beta-D-galactosyl]-sn-glycerol + H2O = acyl-3-O-[alpha-D-galactosyl-(1-&gt;6)-beta-D-galactosyl]-sn-glycerol + a fatty acid + H(+). It carries out the reaction long chain 1,2-diacyl-3-O-[alpha-D-galactosyl-(1-&gt;6)-beta-D-galactosyl]-sn-glycerol + H2O = long chain acyl-3-O-[alpha-D-galactosyl-(1-&gt;6)-beta-D-galactosyl]-sn-glycerol + a fatty acid + H(+). It catalyses the reaction 1,2-dioctanoyl-3-O-[alpha-D-galactosyl-(1-&gt;6)-beta-D-galactosyl]-sn-glycerol + H2O = octanoyl-3-O-[alpha-D-galactosyl-(1-&gt;6)-beta-D-galactosyl]-sn-glycerol + octanoate + H(+). The enzyme catalyses 1,2-didodecanoyl-3-O-[alpha-D-galactosyl-(1-&gt;6)-beta-D-galactosyl]-sn-glycerol + H2O = dodecanoyl-3-O-[alpha-D-galactosyl-(1-&gt;6)-beta-D-galactosyl]-sn-glycerol + dodecanoate + H(+). The catalysed reaction is a 1,2-diacyl-sn-glycero-3-phosphocholine + H2O = a monoacyl-sn-glycero-3-phosphocholine + a fatty acid + H(+). It participates in glycerolipid metabolism; triacylglycerol degradation. It functions in the pathway glycolipid metabolism. Up-regulated by CLPS in the presence of increasing concentrations of bile salts. In terms of biological role, lipase that primarily hydrolyzes triglycerides and galactosylglycerides. In neonates, may play a major role in pancreatic digestion of dietary fats such as milk fat globules enriched in long-chain triglycerides. Hydrolyzes short-, medium- and long-chain fatty acyls in triglycerides without apparent positional specificity. Can completely deacylate triacylglycerols. When the liver matures and bile salt synthesis increases, likely functions mainly as a galactolipase and monoacylglycerol lipase. Hydrolyzes monogalactosyldiglycerols (MGDG) and digalactosyldiacylglycerols (DGDG) present in a plant-based diet, releasing long-chain polyunsaturated fatty acids. Hydrolyzes medium- and long-chain fatty acyls in galactolipids. May act together with LIPF to hydrolyze partially digested triglycerides. Hydrolyzes long-chain monoglycerides with high efficiency. In cytotoxic T cells, contributes to perforin-dependent cell lysis, but is unlikely to mediate direct cytotoxicity. Also has low phospholipase activity. In neurons, required for the localization of the phospholipid 1-oleoyl-2-palmitoyl-PC (OPPC) to neurite tips through acyl chain remodeling of membrane phospholipids. The resulting OPPC-rich lipid membrane domain recruits the t-SNARE protein STX4 by selectively interacting with the STX4 transmembrane domain and this promotes surface expression of the dopamine transporter SLC6A3/DAT at neurite tips by facilitating fusion of SLC6A3-containing transport vesicles with the plasma membrane. This Sus scrofa (Pig) protein is Pancreatic lipase-related protein 2 (PNLIPRP2).